The primary structure comprises 429 residues: Uracil permease (429 aa).

Residues 1-13 (MTRRAIGVSERPP) lie on the Cytoplasmic side of the membrane. The helical transmembrane segment at 14–37 (LLQTIPLSLQHLFAMFGATVLVPV) threads the bilayer. Over 38-41 (LFHI) the chain is Periplasmic. The helical transmembrane segment at 42-61 (NPATVLLFNGIGTLLYLFIC) threads the bilayer. Over 62 to 64 (KGK) the chain is Cytoplasmic. Residues 65–81 (IPAYLGSSFAFISPVLL) traverse the membrane as a discontinuously helical segment. Residue F73 participates in uracil binding. Topologically, residues 82–89 (LLPLGYEV) are periplasmic. A helical transmembrane segment spans residues 90–110 (ALGGFIMCGVLFCLVSFIVKK). The Cytoplasmic segment spans residues 111–122 (AGTGWLDVLFPP). A helical transmembrane segment spans residues 123 to 144 (AAMGAIVAVIGLELAGVAAGMA). The Periplasmic segment spans residues 145 to 155 (GLLPAEGQTPD). The chain crosses the membrane as a helical span at residues 156–171 (SKTIIISITTLAVTVL). Over 172-178 (GSVLFRG) the chain is Cytoplasmic. The helical transmembrane segment at 179 to 199 (FLAIIPILIGVLVGYALSFAM) threads the bilayer. Residues 200–224 (GIVDTTPIINAHWFALPTLYTPRFE) lie on the Periplasmic side of the membrane. Residues 225–248 (WFAILTILPAALVVIAEHVGHLVV) form a helical membrane-spanning segment. E241 is a binding site for uracil. The Cytoplasmic segment spans residues 249–261 (TANIVKKDLLRDP). Residues 262 to 281 (GLHRSMFANGLSTVISGFFG) form a helical membrane-spanning segment. Residues 282–298 (STPNTTYGENIGVMAIT) traverse the membrane as a discontinuously helical segment. G289 and E290 together coordinate uracil. At 299–301 (RVY) the chain is on the cytoplasmic side. The helical transmembrane segment at 302–319 (STWVIGGAAIFAILLSCV) threads the bilayer. Residues 320–332 (GKLAAAIQMIPLP) lie on the Periplasmic side of the membrane. The helical transmembrane segment at 333-354 (VMGGVSLLLYGVIGASGIRVLI) threads the bilayer. At 355–365 (ESKVDYNKAQN) the chain is on the cytoplasmic side. The discontinuously helical intramembrane region spans 366–401 (LILTSVILIIGVSGAKVNIGAAELKGMALATIVGIG). Residues 402–429 (LSLIFKLISVLRPEEVVLDAEDADITDK) are Cytoplasmic-facing.

The protein belongs to the nucleobase:cation symporter-2 (NCS2) (TC 2.A.40) family.

It localises to the cell inner membrane. It catalyses the reaction uracil(in) + H(+)(in) = uracil(out) + H(+)(out). In terms of biological role, transport of uracil in the cell. The sequence is that of Uracil permease (uraA) from Escherichia coli O157:H7.